Here is a 504-residue protein sequence, read N- to C-terminus: ATP-dependent rRNA helicase RRP3 (504 aa).

The span at 34 to 62 (ASASSAASTKESLPVSETISISTSETPVS) shows a compositional bias: low complexity. Positions 34–99 (ASASSAASTK…SSSSPPSVQS (66 aa)) are disordered. Residues 68–79 (SNKEDLSTKKDQ) show a composition bias toward basic and acidic residues. Residues 80-99 (SSASSSSSTSSSSSPPSVQS) show a composition bias toward low complexity. Residues 98-126 (QSFTEFDLVPELLESIQSLKYTQPTPIQA) carry the Q motif motif. Residues 129-301 (IPHALQGKDI…RSLNSPVQVE (173 aa)) enclose the Helicase ATP-binding domain. Position 142–149 (142–149 (AETGSGKT)) interacts with ATP. The short motif at 248–251 (DEVD) is the DEAD box element. A Helicase C-terminal domain is found at 327 to 471 (RLIQIVNLDS…DLPLDEMQGL (145 aa)).

Belongs to the DEAD box helicase family. DDX47/RRP3 subfamily. As to quaternary structure, interacts with the SSU processome.

Its subcellular location is the nucleus. It carries out the reaction ATP + H2O = ADP + phosphate + H(+). Functionally, ATP-dependent rRNA helicase required for pre-ribosomal RNA processing. Involved in the maturation of the 35S-pre-rRNA and to its cleavage to mature 18S rRNA. The sequence is that of ATP-dependent rRNA helicase RRP3 from Lodderomyces elongisporus (strain ATCC 11503 / CBS 2605 / JCM 1781 / NBRC 1676 / NRRL YB-4239) (Yeast).